Reading from the N-terminus, the 149-residue chain is UPF0310 protein msl3206 (149 aa).

This sequence belongs to the UPF0310 family.

This Mesorhizobium japonicum (strain LMG 29417 / CECT 9101 / MAFF 303099) (Mesorhizobium loti (strain MAFF 303099)) protein is UPF0310 protein msl3206.